Reading from the N-terminus, the 614-residue chain is Sodium- and chloride-dependent betaine transporter (614 aa).

The Cytoplasmic segment spans residues 1 to 44 (MDRKVAVHEDGYPVVSWVPEEGEMMDQKGKDQVKDRGQWTNKME). 3 helical membrane-spanning segments follow: residues 45 to 65 (FVLS…FPYL), 73 to 92 (AFFI…VFFL), and 117 to 137 (GIGM…IIIL). The Extracellular portion of the chain corresponds to 138-210 (AWALFYLFSS…SGIHDLGSLR (73 aa)). Cysteines 157 and 166 form a disulfide. Residues Asn-171 and Asn-183 are each glycosylated (N-linked (GlcNAc...) asparagine). Helical transmembrane passes span 211–229 (WELA…FCIW), 238–255 (VVYF…ILLI), 291–308 (IFFS…LGSY), 320–341 (IALC…FSIL), 374–393 (MPLS…FLGL), 423–441 (VLIL…LLVT), 458–478 (GICL…VYGA), 499–518 (ISWL…FSLS), and 538–556 (IGWL…FIII). Residues 557-614 (TFLKTQGSFKKRLRRLITPDPSLPQPGRRPPQDGSSAQNCSSSPAKQELIAWEKETHL) lie on the Cytoplasmic side of the membrane. Residues 574 to 602 (TPDPSLPQPGRRPPQDGSSAQNCSSSPAK) are disordered. Residues 589-601 (DGSSAQNCSSSPA) show a composition bias toward polar residues.

The protein belongs to the sodium:neurotransmitter symporter (SNF) (TC 2.A.22) family. SLC6A12 subfamily. As to quaternary structure, interacts with LIN7C. As to expression, predominantly expressed in the liver (sinusoidal hepatocyte plasma membranes), also present in the renal medulla, where it localizes to the basolateral membranes of collecting ducts (particularly at the papilla tip) and the thick ascending limbs of Henle (at protein level). Some expression is detected in the leptomeninges, but no expression is detected in brain parenchyma, brain blood vessels, ependymal cells, the renal cortex and the intestine.

It is found in the basolateral cell membrane. It localises to the cell membrane. It catalyses the reaction 4-aminobutanoate(out) + chloride(out) + 3 Na(+)(out) = 4-aminobutanoate(in) + chloride(in) + 3 Na(+)(in). The catalysed reaction is glycine betaine(out) + 2 chloride(out) + 3 Na(+)(out) = glycine betaine(in) + 2 chloride(in) + 3 Na(+)(in). In terms of biological role, transporter that mediates cellular uptake of betaine and GABA in a sodium- and chloride-dependent process. May have a role in regulation of GABAergic transmission in the brain through the reuptake of GABA into presynaptic terminals, as well as in osmotic regulation. Probably also involved in renal and hepatic osmotic regulation. The protein is Sodium- and chloride-dependent betaine transporter (Slc6a12) of Mus musculus (Mouse).